Consider the following 232-residue polypeptide: 5'-methylthioadenosine/S-adenosylhomocysteine nucleosidase (232 aa).

Glu12 acts as the Proton acceptor in catalysis. Residues Gly78, Ile152, and 173–174 (ME) contribute to the substrate site. Asp197 (proton donor) is an active-site residue.

It belongs to the PNP/UDP phosphorylase family. MtnN subfamily. In terms of assembly, homodimer.

It carries out the reaction S-adenosyl-L-homocysteine + H2O = S-(5-deoxy-D-ribos-5-yl)-L-homocysteine + adenine. The enzyme catalyses S-methyl-5'-thioadenosine + H2O = 5-(methylsulfanyl)-D-ribose + adenine. The catalysed reaction is 5'-deoxyadenosine + H2O = 5-deoxy-D-ribose + adenine. It functions in the pathway amino-acid biosynthesis; L-methionine biosynthesis via salvage pathway; S-methyl-5-thio-alpha-D-ribose 1-phosphate from S-methyl-5'-thioadenosine (hydrolase route): step 1/2. In terms of biological role, catalyzes the irreversible cleavage of the glycosidic bond in both 5'-methylthioadenosine (MTA) and S-adenosylhomocysteine (SAH/AdoHcy) to adenine and the corresponding thioribose, 5'-methylthioribose and S-ribosylhomocysteine, respectively. Also cleaves 5'-deoxyadenosine, a toxic by-product of radical S-adenosylmethionine (SAM) enzymes, into 5-deoxyribose and adenine. Thus, is required for in vivo function of the radical SAM enzymes biotin synthase and lipoic acid synthase, that are inhibited by 5'-deoxyadenosine accumulation. The sequence is that of 5'-methylthioadenosine/S-adenosylhomocysteine nucleosidase from Salmonella agona (strain SL483).